Consider the following 169-residue polypeptide: 4-hydroxylaminobenzoate lyase (169 aa).

It belongs to the PnbB family.

The enzyme catalyses 4-hydroxylaminobenzoate + H2O + H(+) = 3,4-dihydroxybenzoate + NH4(+). Lyase involved in the degradation of nitroaromatic compounds. Catalyzes the conversion of 4-hydroxylaminobenzoate to 3,4-dihydroxybenzoate (protocatechuate). This Nocardioides sp. (strain LMS-CY) protein is 4-hydroxylaminobenzoate lyase.